The sequence spans 446 residues: Histidine--tRNA ligase (446 aa).

This sequence belongs to the class-II aminoacyl-tRNA synthetase family. Homodimer.

The protein resides in the cytoplasm. The enzyme catalyses tRNA(His) + L-histidine + ATP = L-histidyl-tRNA(His) + AMP + diphosphate + H(+). The protein is Histidine--tRNA ligase of Paraburkholderia phymatum (strain DSM 17167 / CIP 108236 / LMG 21445 / STM815) (Burkholderia phymatum).